The primary structure comprises 614 residues: MNNLIKSKLELLPTSPGCYIHKDKNGTIIYVGKAKNLRNRVRSYFRGSHDTKTEALVSEIVDFEFIVTESNIEALLLEINLIKENKPKYNIMLKDDKSYPFIKITNERYPRLIITRQVKKDGGLYFGPYPDVGAANEIKRLLDRIFPFRKCTNPPSKVCFYYHIGQCMAHTICKKDEAYFKSMAQEVSDFLKGQDDKIIDDLKSKMAVAAQSMEFERAAEYRDLIQAIGTLRTKQRVMAKDLQNRDVFGYYVDKGWMCVQVFFVRQGKLIERDVNLFPYFNDPDEDFLTYVGQFYQEKSHLVPNEVLIPQDIDEEAVKALVDSKILKPQRGEKKQLVNLAIKNARVSLEQKFNLLEKSVEKTQGAIENLGRLLQIPTPVRIESFDNSNIMGTSPVSAMVVFVNGKPSKKDYRKYKIKTVVGPDDYASMREVIRRRYGRVQREALTPPDLIVIDGGQGQVNIAKQVIQEELGLDIPIAGLQKNDKHQTHELLFGDPLEVVDLSRNSQEFFLLQRIQDEVHRFAITFHRQLRSKNSFSSQLDGIDGLGPKRKQNLMKHFKSLTKIKEASVDEIVEVGVPRVVAEAVQRKLNPQGEALPQVAEERVDYQTEGNHNEP.

In terms of domain architecture, GIY-YIG spans 14–91 (TSPGCYIHKD…IKENKPKYNI (78 aa)). The 36-residue stretch at 196 to 231 (DKIIDDLKSKMAVAAQSMEFERAAEYRDLIQAIGTL) folds into the UVR domain. Positions 595 to 614 (LPQVAEERVDYQTEGNHNEP) are disordered. Residues 599-614 (AEERVDYQTEGNHNEP) show a composition bias toward basic and acidic residues.

This sequence belongs to the UvrC family. As to quaternary structure, interacts with UvrB in an incision complex.

The protein resides in the cytoplasm. Its function is as follows. The UvrABC repair system catalyzes the recognition and processing of DNA lesions. UvrC both incises the 5' and 3' sides of the lesion. The N-terminal half is responsible for the 3' incision and the C-terminal half is responsible for the 5' incision. The polypeptide is UvrABC system protein C (Streptococcus pneumoniae serotype 4 (strain ATCC BAA-334 / TIGR4)).